A 281-amino-acid polypeptide reads, in one-letter code: MVWFKRVKPFIRTTDRRDVPEGLWSKCEDCGAMLHRRQLEENLNTCNECGHHFRISPYRYFSILFDNEEFTEFDDCLRAADPLTFVDTKKYPDRVHDTIEKSGKTEACRNAFGKSAGADLVISAMDFGFIGGSMGSVVGEKISRAADKAIELNAPLIVISQSGGARMMEGAFSLMQMAKTAARLTRLGENRLPFISLMTDPTMGGISASFAMLGDLNISEPKALIGFAGPRVIRDTIKRDLPEGFQRAEFLQEHGFVDMIVHRKELKQRLAKTLAMMRVEG.

The region spanning 23–281 (LWSKCEDCGA…KTLAMMRVEG (259 aa)) is the CoA carboxyltransferase N-terminal domain. 4 residues coordinate Zn(2+): Cys27, Cys30, Cys46, and Cys49. The segment at 27–49 (CEDCGAMLHRRQLEENLNTCNEC) adopts a C4-type zinc-finger fold.

Belongs to the AccD/PCCB family. Acetyl-CoA carboxylase is a heterohexamer composed of biotin carboxyl carrier protein (AccB), biotin carboxylase (AccC) and two subunits each of ACCase subunit alpha (AccA) and ACCase subunit beta (AccD). Requires Zn(2+) as cofactor.

Its subcellular location is the cytoplasm. It catalyses the reaction N(6)-carboxybiotinyl-L-lysyl-[protein] + acetyl-CoA = N(6)-biotinyl-L-lysyl-[protein] + malonyl-CoA. The protein operates within lipid metabolism; malonyl-CoA biosynthesis; malonyl-CoA from acetyl-CoA: step 1/1. Its function is as follows. Component of the acetyl coenzyme A carboxylase (ACC) complex. Biotin carboxylase (BC) catalyzes the carboxylation of biotin on its carrier protein (BCCP) and then the CO(2) group is transferred by the transcarboxylase to acetyl-CoA to form malonyl-CoA. In Chlorobium luteolum (strain DSM 273 / BCRC 81028 / 2530) (Pelodictyon luteolum), this protein is Acetyl-coenzyme A carboxylase carboxyl transferase subunit beta.